An 816-amino-acid polypeptide reads, in one-letter code: Phosphatidylinositol 4-kinase beta (816 aa).

Residues 1-30 (MGDTVVEPAPLKPTSEPTSGPPGNNGGSLL) form a disordered region. Gly2 is subject to N-acetylglycine. A PIK helical domain is found at 29–242 (LLSVITEGVG…GTKLRKLILS (214 aa)). Residues 41–67 (SVIDPEVAQKACQEVLEKVKLLHGGVA) form an interaction with ACBD3 region. Disordered regions lie at residues 101–120 (EDEM…RRRR) and 248–318 (AHRK…SFSS). Residue Ser258 is modified to Phosphoserine. Residue Thr263 is modified to Phosphothreonine. Ser266, Ser275, Ser277, Ser284, and Ser294 each carry phosphoserine. Polar residues-rich tracts occupy residues 278-297 (DATA…SNPK) and 306-318 (SSST…SFSS). Ser428 bears the Phosphoserine mark. Thr438 bears the Phosphothreonine mark. Residue Ser511 is modified to Phosphoserine. A phosphothreonine mark is found at Thr517 and Thr519. One can recognise a PI3K/PI4K catalytic domain in the interval 535-801 (EPWQEKVRRI…MVDGSMRSIT (267 aa)). The interval 541-547 (VRRIREG) is G-loop. Residues 668–676 (QVKDRHNGN) are catalytic loop. Positions 687 to 711 (HIDFGFILSSSPRNLGFETSAFKLT) are activation loop.

This sequence belongs to the PI3/PI4-kinase family. Type III PI4K subfamily. Interacts with ARF1 and ARF3 in the Golgi complex, but not with ARF4, ARF5 or ARF6. Interacts with NCS1/FREQ in a calcium-independent manner. Interacts with CALN1/CABP8 and CALN2/CABP7; in a calcium-dependent manner; this interaction competes with NCS1/FREQ binding. Interacts with ACBD3. Interacts with ARMH3, YWHAB, YWHAE, YWHAG, YWHAH, YWHAQ, YWHAZ and SFN. Interacts with GGA2 (via VHS domain); the interaction is important for PI4KB location at the Golgi apparatus membrane. Interacts with ATG9A. As to quaternary structure, (Microbial infection) Interacts with Aichi virus protein 3A. Part of a complex Aichi virus protein 3A/ACBD3/PI4KB that allows the synthesis of PI4P at the viral RNA replication sites. Mg(2+) serves as cofactor. It depends on Mn(2+) as a cofactor. In terms of tissue distribution, widely expressed with highest levels in heart, skeletal muscle, pancreas, testis and ovary. Weakly expressed in liver. Expressed in the innear ear in the epithelium of the spinal organ of corti.

It is found in the endomembrane system. The protein localises to the mitochondrion outer membrane. It localises to the rough endoplasmic reticulum membrane. Its subcellular location is the golgi apparatus. The protein resides in the golgi apparatus membrane. It is found in the cytoplasm. The protein localises to the perinuclear region. It catalyses the reaction a 1,2-diacyl-sn-glycero-3-phospho-(1D-myo-inositol) + ATP = a 1,2-diacyl-sn-glycero-3-phospho-(1D-myo-inositol 4-phosphate) + ADP + H(+). Inhibited by wortmannin and adenosine. Increased kinase activity upon interaction with NCS1/FREQ. With respect to regulation, (Microbial infection) Activated by Aichi virus protein 3A, this activation is sensitized by ACBD3. Functionally, phosphorylates phosphatidylinositol (PI) in the first committed step in the production of the second messenger inositol-1,4,5,-trisphosphate (PIP). May regulate Golgi disintegration/reorganization during mitosis, possibly via its phosphorylation. Involved in Golgi-to-plasma membrane trafficking. May play an important role in the inner ear development. (Microbial infection) Plays an essential role in Aichi virus RNA replication. Recruited by ACBD3 at the viral replication sites. In terms of biological role, (Microbial infection) Required for cellular spike-mediated entry of human coronavirus SARS-CoV. This is Phosphatidylinositol 4-kinase beta from Homo sapiens (Human).